The sequence spans 538 residues: Atos homolog protein B (538 aa).

The segment covering 1 to 18 has biased composition (low complexity); it reads MRHVQAEPSPSSEPEAGP. Disordered regions lie at residues 1-114 and 133-300; these read MRHV…LGVA and TSSW…VLDP. Positions 227-238 are enriched in pro residues; sequence HTPPGPGPPGPC. A phosphoserine mark is found at Ser254 and Ser255. Residues 348 to 430 are required for macropage invasion; sequence LLGNFEESLL…VPKVGTVQVT (83 aa). The transactivation domain 1 (TAD1) stretch occupies residues 436–444; the sequence is QTVVKMFLV.

It belongs to the ATOS family.

The protein localises to the nucleus. Its function is as follows. Transcription regulator that may syncronize transcriptional and translational programs. The chain is Atos homolog protein B from Homo sapiens (Human).